The chain runs to 518 residues: Serine/threonine-protein kinase PRR1 (518 aa).

Position 1 is an N-acetylmethionine (M1). The segment covering 1-12 (MDEYSSIYSQPK) has biased composition (polar residues). Residues 1–59 (MDEYSSIYSQPKTPRLKQEGFPDSIGDQHEKALIDENGEEDKKMASTEGTTGDSRSTPL) are disordered. Residues 16-45 (LKQEGFPDSIGDQHEKALIDENGEEDKKMA) show a composition bias toward basic and acidic residues. Polar residues predominate over residues 47 to 59 (TEGTTGDSRSTPL). Residue S132 is modified to Phosphoserine. The Protein kinase domain occupies 192–508 (WKKVRPIGSG…INEIYESPFV (317 aa)). Residues 198 to 206 (IGSGNFSTV) and K225 each bind ATP. D354 functions as the Proton acceptor in the catalytic mechanism.

The protein belongs to the protein kinase superfamily. CAMK Ser/Thr protein kinase family. NIM1 subfamily.

The protein localises to the cytoplasm. The catalysed reaction is L-seryl-[protein] + ATP = O-phospho-L-seryl-[protein] + ADP + H(+). It carries out the reaction L-threonyl-[protein] + ATP = O-phospho-L-threonyl-[protein] + ADP + H(+). Functionally, protein kinase that functions as a regulator in the pheromone-induced mating pathway downstream of mitogen-activated protein kinase (MAPK) FUS3. Diminishes transcriptional induction of genes in response to pheromone signaling. In Saccharomyces cerevisiae (strain ATCC 204508 / S288c) (Baker's yeast), this protein is Serine/threonine-protein kinase PRR1 (PRR1).